We begin with the raw amino-acid sequence, 205 residues long: MIVQRLLNQLIAQDIRDFRVLAAIAKVPRQLFVDEAMAHKAWDNTALPIGHGQTISQPYMVARMTELLIQNDPAHVLEIGTGSGYQTAVLAHLVEHVYTVERIKSLQFQARRRLRQLDLHNVSAKHGNGWLGWPNKGPFDAILVTAAASEVPTALTDQLADGGRLVLPVGDSQQTLQLIERSGSQLTSRILEPVRFVPLIDGDVE.

Serine 56 is an active-site residue.

Belongs to the methyltransferase superfamily. L-isoaspartyl/D-aspartyl protein methyltransferase family.

The protein localises to the cytoplasm. It catalyses the reaction [protein]-L-isoaspartate + S-adenosyl-L-methionine = [protein]-L-isoaspartate alpha-methyl ester + S-adenosyl-L-homocysteine. In terms of biological role, catalyzes the methyl esterification of L-isoaspartyl residues in peptides and proteins that result from spontaneous decomposition of normal L-aspartyl and L-asparaginyl residues. It plays a role in the repair and/or degradation of damaged proteins. This is Protein-L-isoaspartate O-methyltransferase from Aeromonas hydrophila subsp. hydrophila (strain ATCC 7966 / DSM 30187 / BCRC 13018 / CCUG 14551 / JCM 1027 / KCTC 2358 / NCIMB 9240 / NCTC 8049).